The chain runs to 421 residues: Vinorine synthase (421 aa).

Catalysis depends on proton acceptor residues His-160 and Asp-362.

This sequence belongs to the plant acyltransferase family. Monomer. Mainly expressed in roots and, to a lower level, in leaves.

It catalyses the reaction 16-epivellosimine + acetyl-CoA = vinorine + CoA. The protein operates within alkaloid biosynthesis; ajmaline biosynthesis. With respect to regulation, complete inhibition by 4-(2-aminoethyl)-benzenesulfonyl fluoride (AEBSF), N-tosyl-L-phenylalanine chloromethylketone (TPCK), Hg(2+) and diethyl-pyrocarbonate (DEPC). 50% inhibition by N-(N-(L-3-trans-carboxirane-2-carbonyl)-L-leucyl)-agmanitine (E-64), N-alpha-p-tosyl-L-lysine chloromethylketone (TLCK) and phenylmethylsulfonyl fluoride (PMSF). Its function is as follows. Acetyltransferase involved in the biosynthesis of ajmaline-type monoterpenoid indole alkaloids (MIAs) natural products, important plant-derived pharmaceuticals used in the therapy of heart disorders. Catalyzes the conversion of 16-epivellosimine to vinorine, precursor of vomilenine, an intermediate chemical in the biosynthesis of ajmaline. Acts on gardneral, but not on polyneuridine aldehyde or N-methylgardneral. The polypeptide is Vinorine synthase (Rauvolfia serpentina (Serpentine wood)).